The primary structure comprises 351 residues: N-acetyl-gamma-glutamyl-phosphate reductase (351 aa).

Cysteine 154 is a catalytic residue.

Belongs to the NAGSA dehydrogenase family. Type 1 subfamily.

It is found in the cytoplasm. It carries out the reaction N-acetyl-L-glutamate 5-semialdehyde + phosphate + NADP(+) = N-acetyl-L-glutamyl 5-phosphate + NADPH + H(+). Its pathway is amino-acid biosynthesis; L-arginine biosynthesis; N(2)-acetyl-L-ornithine from L-glutamate: step 3/4. In terms of biological role, catalyzes the NADPH-dependent reduction of N-acetyl-5-glutamyl phosphate to yield N-acetyl-L-glutamate 5-semialdehyde. This chain is N-acetyl-gamma-glutamyl-phosphate reductase, found in Synechocystis sp. (strain ATCC 27184 / PCC 6803 / Kazusa).